We begin with the raw amino-acid sequence, 137 residues long: uncharacterized protein (137 aa).

A run of 5 helical transmembrane segments spans residues 4-26, 35-57, 62-84, 89-111, and 116-135; these read AIIL…KIVC, IVVN…NIII, ILTY…YYAL, ASIV…ILFL, and TLPQ…LLSI. Positions 13 to 135 constitute an EamA domain; sequence VFYGVGTFFA…IIIGIILLSI (123 aa).

The protein resides in the cell membrane. This is an uncharacterized protein from Methanocaldococcus jannaschii (strain ATCC 43067 / DSM 2661 / JAL-1 / JCM 10045 / NBRC 100440) (Methanococcus jannaschii).